Consider the following 132-residue polypeptide: Small ribosomal subunit protein uS8 (132 aa).

This sequence belongs to the universal ribosomal protein uS8 family. As to quaternary structure, part of the 30S ribosomal subunit. Contacts proteins S5 and S12.

Its function is as follows. One of the primary rRNA binding proteins, it binds directly to 16S rRNA central domain where it helps coordinate assembly of the platform of the 30S subunit. The polypeptide is Small ribosomal subunit protein uS8 (Limosilactobacillus reuteri (strain DSM 20016) (Lactobacillus reuteri)).